The following is a 370-amino-acid chain: Selenide, water dikinase 2 (370 aa).

The active site involves Sec-24. A non-standard amino acid (selenocysteine) is located at residue Sec-24. Residues Lys-27, 55-57 (GMD), Asp-76, and Asp-99 contribute to the ATP site. Asp-57 contacts Mg(2+). Asp-99 and Asp-258 together coordinate Mg(2+).

The protein belongs to the selenophosphate synthase 1 family. Class I subfamily. Homodimer. Requires Mg(2+) as cofactor. First expressed in the midgut anlagen with subsequent expression in a variety of tissues including the gut and nervous system.

It carries out the reaction hydrogenselenide + ATP + H2O = selenophosphate + AMP + phosphate + 2 H(+). In terms of biological role, synthesizes selenophosphate from selenide and ATP. The sequence is that of Selenide, water dikinase 2 (Sps2) from Drosophila melanogaster (Fruit fly).